A 2286-amino-acid polypeptide reads, in one-letter code: Unconventional myosin-IXAb (2286 aa).

The Ras-associating domain occupies 16–114 (SEFTLRVYPG…YRFLLREKNL (99 aa)). The Myosin motor domain occupies 148-971 (AQFVADLCSL…LRQRLQDELH (824 aa)). The helical transmembrane segment at 178-198 (IYTYVGSILIAVNPFKFLPIY) threads the bilayer. An ATP-binding site is contributed by 242–249 (GESGSGKT). Residues 853–875 (LNKLMETLGQSEPYFVKCIRSNA) form an actin-binding region. IQ domains follow at residues 976–996 (RRIV…HFCR), 1025–1054 (QQGA…AVLI), 1066–1095 (RNTA…AAVT), and 1089–1118 (QRRA…QQCR). Positions 976 to 1113 (RRIVCLQRSF…QSRQRCRILR (138 aa)) are neck or regulatory domain. Residues 1114-2254 (EQQCREQSKH…PRANRSCPPK (1141 aa)) are tail. Disordered stretches follow at residues 1118–1279 (REQS…QIRE), 1308–1341 (DVPL…FSVS), 1455–1588 (CEED…EPML), and 1732–1754 (DGTI…SDTV). A compositionally biased stretch (polar residues) spans 1123 to 1133 (HPSTVTKSLHQ). The span at 1134–1149 (NTEEAEKLEEVWEKQT) shows a compositional bias: basic and acidic residues. Positions 1263–1273 (PINSAPQTPNR) are enriched in polar residues. Positions 1455 to 1465 (CEEDEDDEYED) are enriched in acidic residues. Over residues 1485 to 1501 (CVFHSDSEMSSQKEQKR) the composition is skewed to basic and acidic residues. A compositionally biased stretch (basic residues) spans 1529–1542 (RGKMRFWSKSKHGD). 2 stretches are compositionally biased toward basic and acidic residues: residues 1550–1562 (RSAD…RRND) and 1572–1585 (GVSE…ENRE). The Phorbol-ester/DAG-type zinc finger occupies 1759 to 1808 (GHIFKSTQYSIPTYCEFCSSLIWMMDKACVCKLCRYACHKKCCLRMTTKC). The Rho-GAP domain occupies 1823 to 2011 (VELSRLTSDE…LIICEQMRKY (189 aa)). Residues 2032–2049 (LTHIRRSMGKSRARKSGH) show a composition bias toward basic residues. 2 disordered regions span residues 2032 to 2087 (LTHI…QQEE) and 2113 to 2286 (PRAS…EFMV). Positions 2080 to 2107 (QAAMQQEEKVLTQQIENLQKEKEELTYE) form a coiled coil. Low complexity-rich tracts occupy residues 2176–2192 (SLDS…SVSS) and 2200–2211 (SSSSGPLFSSSS). The span at 2226 to 2238 (EQASLSARCASSS) shows a compositional bias: polar residues. Residues 2254–2270 (KPREPGDTGGRRREHEF) show a composition bias toward basic and acidic residues.

It belongs to the TRAFAC class myosin-kinesin ATPase superfamily. Myosin family.

The protein resides in the membrane. The protein localises to the cytoplasm. It is found in the synapse. It localises to the cell projection. Its subcellular location is the growth cone. Functionally, myosins are actin-based motor molecules with ATPase activity. Unconventional myosins serve in intracellular movements. Regulates Rho by stimulating it's GTPase activity in neurons. Required for the regulation of neurite branching and motor neuron axon guidance. This chain is Unconventional myosin-IXAb (myo9ab), found in Danio rerio (Zebrafish).